The sequence spans 539 residues: Nucleoporin NUP60 (539 aa).

Residues Ser-10, Ser-49, Ser-81, and Ser-89 each carry the phosphoserine modification. The segment at 44–80 (DSARVSPRNNVANKQPRNESFNRRISSMPGGYFHSEI) is disordered. A coiled-coil region spans residues 91–118 (VVSAVGEARNDIENKEEEYDETHETNIS). 4 positions are modified to phosphoserine: Ser-162, Ser-171, Ser-214, and Ser-222. 2 stretches are compositionally biased toward polar residues: residues 242–252 (TANTSAQSIAS) and 258–267 (SGVSKSAPSK). Disordered regions lie at residues 242–267 (TANT…APSK), 305–329 (IRKH…TTVK), and 347–493 (NATK…GKHI). Positions 347–359 (NATKISPSAPSKD) are enriched in polar residues. Phosphoserine is present on residues Ser-352, Ser-360, Ser-374, and Ser-382. Polar residues-rich tracts occupy residues 395 to 433 (SAFN…TNLQ) and 448 to 485 (GDST…LSQE). 2 FXF repeats span residues 399 to 401 (FSF) and 427 to 429 (FNF). Residue Thr-460 is modified to Phosphothreonine. The stretch at 469 to 471 (FVF) is one FXF 3 repeat. Phosphoserine occurs at positions 480 and 483. An FXF 4 repeat occupies 509-511 (FDF).

In terms of assembly, component of the nuclear pore complex (NPC). NPC constitutes the exclusive means of nucleocytoplasmic transport. NPCs allow the passive diffusion of ions and small molecules and the active, nuclear transport receptor-mediated bidirectional transport of macromolecules such as proteins, RNAs, ribonucleoparticles (RNPs), and ribosomal subunits across the nuclear envelope. Due to its 8-fold rotational symmetry, all subunits are present with 8 copies or multiples thereof. Binds to NUP1 and NUP2 forming the nuclear basket and the distal ring. The interaction with NUP2 is GSP1-GTP-dependent. Interacts through its FG repeats with karyopherins, such as KAP123 and KAP95-SRP1 (KAP60). Also interacts with GSP1-GTP and SRM1 (PRP20), where NUP60 reduces SRM1 activity, thus inhibiting GSP1 guanine nucleotide dissociation. Post-translationally, phosphorylated by CDC28.

It localises to the nucleus. The protein localises to the nuclear pore complex. The protein resides in the nucleus membrane. In terms of biological role, functions as a component of the nuclear pore complex (NPC). NPC components, collectively referred to as nucleoporins (NUPs), can play the role of both NPC structural components and of docking or interaction partners for transiently associated nuclear transport factors. Active directional transport is assured by both, a Phe-Gly (FG) repeat affinity gradient for these transport factors across the NPC and a transport cofactor concentration gradient across the nuclear envelope (GSP1 and GSP2 GTPases associated predominantly with GTP in the nucleus, with GDP in the cytoplasm). This Saccharomyces cerevisiae (strain ATCC 204508 / S288c) (Baker's yeast) protein is Nucleoporin NUP60 (NUP60).